The primary structure comprises 1959 residues: Myosin-9 (1959 aa).

Residues Ala27–Pro77 form the Myosin N-terminal SH3-like domain. Residues Ser81 to Asp776 enclose the Myosin motor domain. Gly174–Thr181 provides a ligand contact to ATP. Residues Leu654–His676 are actin-binding. An IQ domain is found at Ile779–Ala808. The stretch at Leu837–Leu1925 forms a coiled coil. 4 disordered regions span residues Glu1118–Glu1168, Arg1694–Gly1717, Leu1879–Lys1917, and Lys1936–Glu1959. Composition is skewed to basic and acidic residues over residues Ser1122–Leu1148 and Arg1694–Asp1704. Residues Asp1947 to Glu1959 are compositionally biased toward basic and acidic residues.

This sequence belongs to the TRAFAC class myosin-kinesin ATPase superfamily. Myosin family. Myosin is a hexameric protein that consists of 2 heavy chain subunits (MHC), 2 alkali light chain subunits (MLC) and 2 regulatory light chain subunits (MLC-2). Expressed in fibroblasts, brain, lung, kidney, spleen, and skeletal, cardiac and smooth muscles.

It is found in the cytoplasm. It localises to the cytoskeleton. Its subcellular location is the cell cortex. The protein resides in the cytoplasmic vesicle. The protein localises to the secretory vesicle. It is found in the cortical granule. Its function is as follows. Cellular myosin that appears to play a role in cytokinesis, cell shape, and specialized functions such as secretion and capping. The chain is Myosin-9 (MYH9) from Gallus gallus (Chicken).